The sequence spans 476 residues: Angiotensinogen (476 aa).

An N-terminal signal peptide occupies residues M1–G24. D25 bears the Beta-decarboxylated aspartate; in form angiotensin-A mark. N-linked (GlcNAc...) asparagine glycosylation is found at N38, N161, N295, and N319. A disulfide bridge links C42 with C162.

The protein belongs to the serpin family. In terms of assembly, during pregnancy, exists as a disulfide-linked 2:2 heterotetramer with the proform of PRG2 and as a complex (probably a 2:2:2 heterohexamer) with pro-PRG2 and C3dg. In terms of processing, beta-decarboxylation of Asp-25 in angiotensin-2, by mononuclear leukocytes produces alanine. The resulting peptide form, angiotensin-A, has the same affinity for the AT1 receptor as angiotensin-2, but a higher affinity for the AT2 receptor. In response to low blood pressure, the enzyme renin/REN cleaves angiotensinogen to produce angiotensin-1. Angiotensin-1 is a substrate of ACE (angiotensin converting enzyme) that removes a dipeptide to yield the physiologically active peptide angiotensin-2. Angiotensin-1 and angiotensin-2 can be further processed to generate angiotensin-3, angiotensin-4. Angiotensin 1-9 is cleaved from angiotensin-1 by ACE2 and can be further processed by ACE to produce angiotensin 1-7, angiotensin 1-5 and angiotensin 1-4. Angiotensin 1-7 has also been proposed to be cleaved from angiotensin-2 by ACE2 or from angiotensin-1 by MME (neprilysin). Post-translationally, the disulfide bond is labile. Angiotensinogen is present in the circulation in a near 40:60 ratio with the oxidized disulfide-bonded form, which preferentially interacts with receptor-bound renin. As to expression, expressed by the liver and secreted in plasma.

Its subcellular location is the secreted. In terms of biological role, essential component of the renin-angiotensin system (RAS), a potent regulator of blood pressure, body fluid and electrolyte homeostasis. Its function is as follows. Acts directly on vascular smooth muscle as a potent vasoconstrictor, affects cardiac contractility and heart rate through its action on the sympathetic nervous system, and alters renal sodium and water absorption through its ability to stimulate the zona glomerulosa cells of the adrenal cortex to synthesize and secrete aldosterone. Acts by binding to angiotensin receptors AGTR1 and AGTR2. Also binds the DEAR/FBXW7-AS1 receptor. Functionally, stimulates aldosterone release. Is a ligand for the G-protein coupled receptor MAS1. Has vasodilator and antidiuretic effects. Has an antithrombotic effect that involves MAS1-mediated release of nitric oxide from platelets. The protein is Angiotensinogen of Homo sapiens (Human).